The chain runs to 139 residues: ATP synthase epsilon chain (139 aa).

It belongs to the ATPase epsilon chain family. As to quaternary structure, F-type ATPases have 2 components, CF(1) - the catalytic core - and CF(0) - the membrane proton channel. CF(1) has five subunits: alpha(3), beta(3), gamma(1), delta(1), epsilon(1). CF(0) has three main subunits: a, b and c.

The protein localises to the cell inner membrane. Produces ATP from ADP in the presence of a proton gradient across the membrane. This chain is ATP synthase epsilon chain, found in Nitrosospira multiformis (strain ATCC 25196 / NCIMB 11849 / C 71).